The following is a 257-amino-acid chain: Zinc import ATP-binding protein ZnuC (257 aa).

The region spanning 6–221 (IRLDQVGVTF…PAFVELFGKT (216 aa)) is the ABC transporter domain. ATP is bound at residue 38-45 (GPNGAGKT).

The protein belongs to the ABC transporter superfamily. Zinc importer (TC 3.A.1.15.5) family. The complex is composed of two ATP-binding proteins (ZnuC), two transmembrane proteins (ZnuB) and a solute-binding protein (ZnuA).

Its subcellular location is the cell inner membrane. It catalyses the reaction Zn(2+)(out) + ATP(in) + H2O(in) = Zn(2+)(in) + ADP(in) + phosphate(in) + H(+)(in). Functionally, part of the ABC transporter complex ZnuABC involved in zinc import. Responsible for energy coupling to the transport system. This chain is Zinc import ATP-binding protein ZnuC, found in Pseudomonas putida (strain ATCC 47054 / DSM 6125 / CFBP 8728 / NCIMB 11950 / KT2440).